The sequence spans 207 residues: GTP-binding protein RHO1 (207 aa).

18-25 provides a ligand contact to GTP; sequence GDGACGKT. The Effector region motif lies at 40–48; it reads YVPTVFDNY. Residues 65–69 and 123–126 contribute to the GTP site; these read DTAGQ and CKAD. The disordered stretch occupies residues 187-207; sequence GKQGKSKAKSDKKKKKKCVVL. Basic residues predominate over residues 190–207; that stretch reads GKSKAKSDKKKKKKCVVL. Cys204 is modified (cysteine methyl ester). Cys204 carries the S-geranylgeranyl cysteine lipid modification. The propeptide at 205–207 is removed in mature form; that stretch reads VVL.

Belongs to the small GTPase superfamily. Rho family.

It is found in the cell membrane. Its function is as follows. Involved in the regulation of actin polarization. Rho proteins are required for distinct steps during polarized hyphal growth of A.gossypii. In Eremothecium gossypii (strain ATCC 10895 / CBS 109.51 / FGSC 9923 / NRRL Y-1056) (Yeast), this protein is GTP-binding protein RHO1 (RHO1).